The sequence spans 395 residues: Extracellular cysteine protease (395 aa).

A signal peptide spans 1–30 (MKKKLSYMITIMLAFTLSLALGLFFNSAHA). A propeptide spanning residues 31-221 (DSLPQKNGAN…TLEYQSTRNE (191 aa)) is cleaved from the precursor. Residues Cys245, His341, and Asn362 contribute to the active site.

Belongs to the peptidase C47 family. Proteolytically cleaved.

The protein localises to the secreted. The protein resides in the cell wall. In terms of biological role, cysteine protease able to cleave elastin, insulin, myoglobin, fibronectin, fibrinogen, HMW-kininogen, alpha-1-protease inhibitor and alpha-1-antitrypsin. Along with other extracellular proteases may contribute to the colonization and infection of human tissues. This chain is Extracellular cysteine protease (ecpA), found in Staphylococcus epidermidis (strain ATCC 35984 / DSM 28319 / BCRC 17069 / CCUG 31568 / BM 3577 / RP62A).